The chain runs to 805 residues: Leucine--tRNA ligase (805 aa).

Residues 40 to 51 (PYPSGQGLHVGH) carry the 'HIGH' region motif. Positions 576–580 (KMSKS) match the 'KMSKS' region motif. Lys579 serves as a coordination point for ATP.

It belongs to the class-I aminoacyl-tRNA synthetase family.

It localises to the cytoplasm. The catalysed reaction is tRNA(Leu) + L-leucine + ATP = L-leucyl-tRNA(Leu) + AMP + diphosphate. In Ligilactobacillus salivarius (strain UCC118) (Lactobacillus salivarius), this protein is Leucine--tRNA ligase.